A 445-amino-acid polypeptide reads, in one-letter code: E3 ubiquitin-protein ligase pellino homolog 3 (445 aa).

Residues methionine 1–glycine 24 form a disordered region. Serine 11 carries the phosphoserine modification. The span at proline 12 to glycine 24 shows a compositional bias: polar residues.

It belongs to the pellino family. As to quaternary structure, interacts with TRAF6, MAP3K14 and MAP3K7. In terms of processing, phosphorylated by IRAK1 enhancing its E3 ligase activity.

It catalyses the reaction S-ubiquitinyl-[E2 ubiquitin-conjugating enzyme]-L-cysteine + [acceptor protein]-L-lysine = [E2 ubiquitin-conjugating enzyme]-L-cysteine + N(6)-ubiquitinyl-[acceptor protein]-L-lysine.. Its pathway is protein modification; protein ubiquitination. Functionally, E3 ubiquitin ligase catalyzing the covalent attachment of ubiquitin moieties onto substrate proteins. Involved in the TLR and IL-1 signaling pathways via interaction with the complex containing IRAK kinases and TRAF6. Mediates 'Lys-63'-linked polyubiquitination of IRAK1. Can activate AP1/JUN and ELK1. Acts as a regulator of innate immunity by mediating 'Lys-63'-linked polyubiquitination of RIPK2 downstream of NOD1 and NOD2, thereby transforming RIPK2 into a scaffolding protein for downstream effectors, ultimately leading to activation of the NF-kappa-B and MAP kinases signaling. Catalyzes 'Lys-63'-linked polyubiquitination of RIPK2 in parallel of XIAP. The sequence is that of E3 ubiquitin-protein ligase pellino homolog 3 from Mus musculus (Mouse).